A 239-amino-acid polypeptide reads, in one-letter code: Purine nucleoside phosphorylase DeoD-type (239 aa).

An a purine D-ribonucleoside-binding site is contributed by His5. Phosphate contacts are provided by residues Gly21, Arg25, Arg44, and Arg88–Ser91. Residues Glu180–Glu182 and Ser204–Asp205 each bind a purine D-ribonucleoside. Catalysis depends on Asp205, which acts as the Proton donor.

This sequence belongs to the PNP/UDP phosphorylase family. As to quaternary structure, homohexamer; trimer of homodimers.

The catalysed reaction is a purine D-ribonucleoside + phosphate = a purine nucleobase + alpha-D-ribose 1-phosphate. It carries out the reaction a purine 2'-deoxy-D-ribonucleoside + phosphate = a purine nucleobase + 2-deoxy-alpha-D-ribose 1-phosphate. Functionally, catalyzes the reversible phosphorolytic breakdown of the N-glycosidic bond in the beta-(deoxy)ribonucleoside molecules, with the formation of the corresponding free purine bases and pentose-1-phosphate. This chain is Purine nucleoside phosphorylase DeoD-type, found in Pectobacterium atrosepticum (strain SCRI 1043 / ATCC BAA-672) (Erwinia carotovora subsp. atroseptica).